Reading from the N-terminus, the 518-residue chain is Zinc finger protein 449 (518 aa).

An SCAN box domain is found at arginine 30 to leucine 112. Residues asparagine 292–leucine 304 are compositionally biased toward polar residues. The disordered stretch occupies residues asparagine 292 to cysteine 325. 7 consecutive C2H2-type zinc fingers follow at residues histidine 323–histidine 345, histidine 351–histidine 373, tyrosine 379–histidine 401, tyrosine 407–histidine 429, histidine 435–histidine 457, phenylalanine 463–histidine 485, and tyrosine 491–histidine 513.

It belongs to the krueppel C2H2-type zinc-finger protein family.

The protein localises to the nucleus. Its function is as follows. May be involved in transcriptional regulation. This Pan troglodytes (Chimpanzee) protein is Zinc finger protein 449 (ZNF449).